The chain runs to 216 residues: Somatotropin (216 aa).

Positions 1 to 26 (MAAGSWTAGLLAFALLCLPWPQEASA) are cleaved as a signal peptide. His45 is a binding site for Zn(2+). A disulfide bond links Cys78 and Cys189. Ser131 carries the post-translational modification Phosphoserine. Glu198 contacts Zn(2+). Cys206 and Cys214 are oxidised to a cystine.

The protein belongs to the somatotropin/prolactin family.

The protein localises to the secreted. In terms of biological role, plays an important role in growth control. Its major role in stimulating body growth is to stimulate the liver and other tissues to secrete IGF1. It stimulates both the differentiation and proliferation of myoblasts. It also stimulates amino acid uptake and protein synthesis in muscle and other tissues. The protein is Somatotropin (GH1) of Oryctolagus cuniculus (Rabbit).